A 507-amino-acid polypeptide reads, in one-letter code: Nucleoporin p54 (507 aa).

9 repeat units span residues 5–6, 25–26, 28–29, 53–54, 61–62, 63–64, 67–68, 87–88, and 444–445. The 9 X 2 AA repeats of F-G stretch occupies residues 5–445; that stretch reads FGAPSGTSGT…SQIRMQNHFG (441 aa).

Belongs to the NUP54 family. In terms of assembly, component of the p62 complex, a complex composed of NUP62, NUP54, and the isoform p58 and isoform p45 of NUP58. Interacts with NUTF2. In terms of processing, O-glycosylated.

The protein resides in the nucleus. Its subcellular location is the nuclear pore complex. It localises to the nucleus membrane. Functionally, component of the nuclear pore complex, a complex required for the trafficking across the nuclear membrane. This chain is Nucleoporin p54 (NUP54), found in Homo sapiens (Human).